The following is an 81-amino-acid chain: Large ribosomal subunit protein uL29c (81 aa).

The protein belongs to the universal ribosomal protein uL29 family.

The protein resides in the plastid. It is found in the chloroplast. The sequence is that of Large ribosomal subunit protein uL29c from Phaeodactylum tricornutum (strain CCAP 1055/1).